Consider the following 277-residue polypeptide: Formamidopyrimidine-DNA glycosylase (277 aa).

The Schiff-base intermediate with DNA role is filled by Pro-2. The active-site Proton donor is Glu-3. Lys-60 functions as the Proton donor; for beta-elimination activity in the catalytic mechanism. DNA is bound by residues His-94, Arg-113, and Arg-158. The FPG-type zinc finger occupies 243 to 277 (WVYNRAGEPCKVCGDVIQRIKLGGRSSHFCRQCQV). Residue Arg-267 is the Proton donor; for delta-elimination activity of the active site.

It belongs to the FPG family. In terms of assembly, monomer. Zn(2+) serves as cofactor.

The catalysed reaction is Hydrolysis of DNA containing ring-opened 7-methylguanine residues, releasing 2,6-diamino-4-hydroxy-5-(N-methyl)formamidopyrimidine.. It catalyses the reaction 2'-deoxyribonucleotide-(2'-deoxyribose 5'-phosphate)-2'-deoxyribonucleotide-DNA = a 3'-end 2'-deoxyribonucleotide-(2,3-dehydro-2,3-deoxyribose 5'-phosphate)-DNA + a 5'-end 5'-phospho-2'-deoxyribonucleoside-DNA + H(+). Its function is as follows. Involved in base excision repair of DNA damaged by oxidation or by mutagenic agents. Acts as a DNA glycosylase that recognizes and removes damaged bases. Has a preference for oxidized purines, such as 7,8-dihydro-8-oxoguanine (8-oxoG). Has AP (apurinic/apyrimidinic) lyase activity and introduces nicks in the DNA strand. Cleaves the DNA backbone by beta-delta elimination to generate a single-strand break at the site of the removed base with both 3'- and 5'-phosphates. The polypeptide is Formamidopyrimidine-DNA glycosylase (Trichormus variabilis (strain ATCC 29413 / PCC 7937) (Anabaena variabilis)).